We begin with the raw amino-acid sequence, 233 residues long: Phosphoribosylformylglycinamidine synthase subunit PurQ (233 aa).

Residues 3–233 (AAILVFPGIN…GLAQHLEKAA (231 aa)) form the Glutamine amidotransferase type-1 domain. Cys-87 (nucleophile) is an active-site residue. Active-site residues include His-204 and Glu-206.

Part of the FGAM synthase complex composed of 1 PurL, 1 PurQ and 2 PurS subunits.

It localises to the cytoplasm. The enzyme catalyses N(2)-formyl-N(1)-(5-phospho-beta-D-ribosyl)glycinamide + L-glutamine + ATP + H2O = 2-formamido-N(1)-(5-O-phospho-beta-D-ribosyl)acetamidine + L-glutamate + ADP + phosphate + H(+). It catalyses the reaction L-glutamine + H2O = L-glutamate + NH4(+). Its pathway is purine metabolism; IMP biosynthesis via de novo pathway; 5-amino-1-(5-phospho-D-ribosyl)imidazole from N(2)-formyl-N(1)-(5-phospho-D-ribosyl)glycinamide: step 1/2. In terms of biological role, part of the phosphoribosylformylglycinamidine synthase complex involved in the purines biosynthetic pathway. Catalyzes the ATP-dependent conversion of formylglycinamide ribonucleotide (FGAR) and glutamine to yield formylglycinamidine ribonucleotide (FGAM) and glutamate. The FGAM synthase complex is composed of three subunits. PurQ produces an ammonia molecule by converting glutamine to glutamate. PurL transfers the ammonia molecule to FGAR to form FGAM in an ATP-dependent manner. PurS interacts with PurQ and PurL and is thought to assist in the transfer of the ammonia molecule from PurQ to PurL. The sequence is that of Phosphoribosylformylglycinamidine synthase subunit PurQ from Bradyrhizobium diazoefficiens (strain JCM 10833 / BCRC 13528 / IAM 13628 / NBRC 14792 / USDA 110).